The primary structure comprises 707 residues: Caprin-1 (707 aa).

Low complexity-rich tracts occupy residues 1 to 15 (MPSATSHSGSGSKSS) and 22 to 43 (GSSGSEAAAGAAAPASQHPATG). Positions 1 to 48 (MPSATSHSGSGSKSSGPPPPSGSSGSEAAAGAAAPASQHPATGTGAVQ) are disordered. N-acetylproline is present on proline 2. At serine 10 the chain carries Phosphoserine. Positions 58–92 (VIDKKLRNLEKKKGKLDDYQERMNKGERLNQDQLD) form a coiled coil. Phosphoserine is present on serine 113. Positions 123–151 (KTIKKTARREQLMREEAEQKRLKTVLELQ) form a coiled coil. An Omega-N-methylarginine modification is found at arginine 163. A compositionally biased stretch (low complexity) spans 325–335 (LQQQPQAASPS). A disordered region spans residues 325–347 (LQQQPQAASPSVPEPHSLTPVAQ). Residues serine 333 and serine 341 each carry the phosphoserine modification. Residues 358–379 (QDLMAQMQGPYNFIQDSMLDFE) form a G3BP1-binding region. Disordered regions lie at residues 412–496 (ESRL…AGTS), 526–558 (PANEPETLKQQSQYQATYNQSFSSQPHQVEQTE), and 570–707 (TYHG…QQVN). Positions 431 to 452 (PLVSSTSEGYTASQPLYQPSHA) are enriched in polar residues. A compositionally biased stretch (basic and acidic residues) spans 453–462 (TEQRPQKEPM). The segment covering 465–474 (IQATISLNTD) has biased composition (polar residues). Positions 475-489 (QTTASSSLPAASQPQ) are enriched in low complexity. Composition is skewed to polar residues over residues 533–552 (LKQQSQYQATYNQSFSSQPH) and 572–603 (HGSQDQPHQVPGNHQQPPQQNTGFPRSSQPYY). The residue at position 623 (tyrosine 623) is a Phosphotyrosine. 2 positions are modified to omega-N-methylarginine: arginine 624 and arginine 631. Residues tyrosine 634 and tyrosine 637 each carry the phosphotyrosine modification. At arginine 638 the chain carries Omega-N-methylarginine. A compositionally biased stretch (polar residues) spans 640–655 (SFSNTPNSGYSQSQFT). Residues serine 642 and serine 647 are each glycosylated (O-linked (GlcNAc) serine). Phosphotyrosine is present on residues tyrosine 649, tyrosine 660, tyrosine 663, and tyrosine 668. 2 stretches are compositionally biased toward low complexity: residues 674 to 684 (RGSGQSGPRGA) and 695 to 707 (NRGMPQMNTQQVN). Position 696 is an asymmetric dimethylarginine; alternate (arginine 696). Position 696 is an omega-N-methylarginine; alternate (arginine 696).

This sequence belongs to the caprin family. As to quaternary structure, may form homomultimers. Interacts with G3BP1; interaction is direct and promotes stress granule formation. Interacts with G3BP2; interaction is direct and promotes stress granule formation. Interacts with PQBP1. Interacts with DDX3X. Interacts (when phosphorylated by EPHA4) with FMR1; interaction with FMR1 promotes formation of a membraneless compartment. Tyrosine phosphorylation by EPHA4 promotes interaction with FMR1 and liquid-liquid phase separation (LLPS) for the formation of a membraneless compartment that concentrates mRNAs with associated regulatory factors. In terms of processing, O-glycosylated (O-GlcNAcylated), in a cell cycle-dependent manner. O-glycosylation by OGT inhibit ability to undergo liquid-liquid phase separation (LLPS). As to expression, highest expression in thymus, spleen and brain (at protein level). Lower levels in kidney, muscle and liver (at protein level).

The protein localises to the cytoplasm. Its subcellular location is the cytoplasmic ribonucleoprotein granule. The protein resides in the cytosol. It localises to the cell projection. It is found in the dendrite. The protein localises to the lamellipodium. Its activity is regulated as follows. Ability to mediate liquid-liquid phase separation is regulated by ATP: moderate concentrations of ATP enhance phase separation, whereas high concentrations of ATP lead to inhibition of phase separation. MRNA-binding protein that acts as a regulator of mRNAs transport, translation and/or stability, and which is involved in neurogenesis, synaptic plasticity in neurons and cell proliferation and migration in multiple cell types. Plays an essential role in cytoplasmic stress granule formation. Acts as an mRNA regulator by mediating formation of some phase-separated membraneless compartment: undergoes liquid-liquid phase separation upon binding to target mRNAs, leading to assemble mRNAs into cytoplasmic ribonucleoprotein granules that concentrate mRNAs with associated regulatory factors. Undergoes liquid-liquid phase separation following phosphorylation and interaction with FMR1, promoting formation of cytoplasmic ribonucleoprotein granules that concentrate mRNAs with factors that inhibit translation and mediate deadenylation of target mRNAs. In these cytoplasmic ribonucleoprotein granules, CAPRIN1 mediates recruitment of CNOT7 deadenylase, leading to mRNA deadenylation and degradation. Binds directly and selectively to MYC and CCND2 mRNAs. In neuronal cells, directly binds to several mRNAs associated with RNA granules, including BDNF, CAMK2A, CREB1, MAP2, NTRK2 mRNAs, as well as to GRIN1 and KPNB1 mRNAs, but not to rRNAs. The chain is Caprin-1 (Caprin1) from Mus musculus (Mouse).